Consider the following 558-residue polypeptide: Potassium-transporting ATPase potassium-binding subunit (558 aa).

11 helical membrane-spanning segments follow: residues 1–21 (MDTL…VLIH), 59–79 (PAYL…VYGL), 85–105 (FLPY…NTAV), 130–150 (GLAV…IALV), 179–199 (LSLV…FAGF), 245–265 (PTAW…FSLP), 279–299 (TAIV…LTIF), 374–394 (GLYG…LLVG), 416–436 (ILVT…IPAV), 484–504 (ALGV…LALA), and 527–547 (FVGL…FPVL).

Belongs to the KdpA family. The system is composed of three essential subunits: KdpA, KdpB and KdpC.

It is found in the cell membrane. Functionally, part of the high-affinity ATP-driven potassium transport (or Kdp) system, which catalyzes the hydrolysis of ATP coupled with the electrogenic transport of potassium into the cytoplasm. This subunit binds the extracellular potassium ions and delivers the ions to the membrane domain of KdpB through an intramembrane tunnel. In Clavibacter michiganensis subsp. michiganensis (strain NCPPB 382), this protein is Potassium-transporting ATPase potassium-binding subunit.